The chain runs to 182 residues: Ribosome-recycling factor (182 aa).

The protein belongs to the RRF family.

Its subcellular location is the cytoplasm. Responsible for the release of ribosomes from messenger RNA at the termination of protein biosynthesis. May increase the efficiency of translation by recycling ribosomes from one round of translation to another. This chain is Ribosome-recycling factor, found in Thermosynechococcus vestitus (strain NIES-2133 / IAM M-273 / BP-1).